A 227-amino-acid polypeptide reads, in one-letter code: MMLHIPGVLTKEQVAQCRDILDAADWTDGNATSGAQSALAKRNRQLPEGSPAARAAGDAIQDALARNALFFSAALPLKVFPPLFNRYAGGDAFGTHVDNAIRLLRGTDFRVRSDLSATLFLEEPEHYDGGELCVEDTYGVHRAKLPAGDMVLYPASSLHHVTPVTRGARVASFFWIQSMVRDDADRTLLYQLDTQIQRLTAEKGGRDASVIALTGIYHNLLRRWADA.

The 101-residue stretch at 78–178 folds into the Fe2OG dioxygenase domain; the sequence is KVFPPLFNRY…RVASFFWIQS (101 aa). 3 residues coordinate Fe cation: H96, D98, and H159. R169 is a 2-oxoglutarate binding site.

Fe(2+) is required as a cofactor. The cofactor is L-ascorbate.

The chain is PKHD-type hydroxylase BURPS668_A1690 from Burkholderia pseudomallei (strain 668).